The following is a 202-amino-acid chain: Molybdenum cofactor guanylyltransferase (202 aa).

GTP contacts are provided by residues 9–11 (LAG), Lys22, Asp70, and Asp96. Position 96 (Asp96) interacts with Mg(2+).

It belongs to the MobA family. As to quaternary structure, monomer. The cofactor is Mg(2+).

It is found in the cytoplasm. It carries out the reaction Mo-molybdopterin + GTP + H(+) = Mo-molybdopterin guanine dinucleotide + diphosphate. Its function is as follows. Transfers a GMP moiety from GTP to Mo-molybdopterin (Mo-MPT) cofactor (Moco or molybdenum cofactor) to form Mo-molybdopterin guanine dinucleotide (Mo-MGD) cofactor. In Desulfosudis oleivorans (strain DSM 6200 / JCM 39069 / Hxd3) (Desulfococcus oleovorans), this protein is Molybdenum cofactor guanylyltransferase.